A 143-amino-acid chain; its full sequence is Nucleoside diphosphate kinase (143 aa).

The ATP site is built by lysine 11, phenylalanine 59, arginine 87, threonine 93, arginine 104, and asparagine 114. The active-site Pros-phosphohistidine intermediate is the histidine 117.

Belongs to the NDK family. In terms of assembly, homotetramer. The cofactor is Mg(2+).

It is found in the cytoplasm. The enzyme catalyses a 2'-deoxyribonucleoside 5'-diphosphate + ATP = a 2'-deoxyribonucleoside 5'-triphosphate + ADP. It catalyses the reaction a ribonucleoside 5'-diphosphate + ATP = a ribonucleoside 5'-triphosphate + ADP. Its function is as follows. Major role in the synthesis of nucleoside triphosphates other than ATP. The ATP gamma phosphate is transferred to the NDP beta phosphate via a ping-pong mechanism, using a phosphorylated active-site intermediate. This chain is Nucleoside diphosphate kinase, found in Stutzerimonas stutzeri (strain A1501) (Pseudomonas stutzeri).